Reading from the N-terminus, the 221-residue chain is Ribosomal RNA large subunit methyltransferase E (221 aa).

5 residues coordinate S-adenosyl-L-methionine: Gly-60, Trp-62, Asp-89, Asp-105, and Asp-134. The active-site Proton acceptor is Lys-174.

This sequence belongs to the class I-like SAM-binding methyltransferase superfamily. RNA methyltransferase RlmE family.

Its subcellular location is the cytoplasm. It carries out the reaction uridine(2552) in 23S rRNA + S-adenosyl-L-methionine = 2'-O-methyluridine(2552) in 23S rRNA + S-adenosyl-L-homocysteine + H(+). Specifically methylates the uridine in position 2552 of 23S rRNA at the 2'-O position of the ribose in the fully assembled 50S ribosomal subunit. This Cupriavidus taiwanensis (strain DSM 17343 / BCRC 17206 / CCUG 44338 / CIP 107171 / LMG 19424 / R1) (Ralstonia taiwanensis (strain LMG 19424)) protein is Ribosomal RNA large subunit methyltransferase E.